A 355-amino-acid chain; its full sequence is N6-Methyl-AMP deaminase (355 aa).

Zn(2+)-binding residues include histidine 24 and histidine 26. N(6)-methyl-AMP contacts are provided by residues histidine 26, asparagine 28, histidine 74, 106–109 (STPR), aspartate 148, and glycine 181. Histidine 208 provides a ligand contact to Zn(2+). N(6)-methyl-AMP is bound by residues glutamate 211, aspartate 293, and aspartate 294. Glutamate 211 serves as the catalytic Proton donor. Position 293 (aspartate 293) interacts with Zn(2+).

This sequence belongs to the metallo-dependent hydrolases superfamily. Adenosine and AMP deaminases family. Monomer. The cofactor is Zn(2+).

The enzyme catalyses N(6)-methyl-AMP + H2O + H(+) = IMP + methylamine. Functionally, catalyzes the hydrolysis of the free cytosolic methylated adenosine nucleotide N(6)-methyl-AMP (N6-mAMP) to produce inositol monophosphate (IMP) and methylamine. Is required for the catabolism of cytosolic N6-mAMP, which is derived from the degradation of mRNA containing N6-methylated adenine (m6A). Catalyzes the removal of different alkyl groups not only from N6-substituted purine or 2-aminopurine nucleoside monophosphates but also from O6-substituted compounds in vitro. In Homo sapiens (Human), this protein is N6-Methyl-AMP deaminase.